The following is a 156-amino-acid chain: Small ribosomal subunit protein uS7c (156 aa).

It belongs to the universal ribosomal protein uS7 family. Part of the 30S ribosomal subunit.

The protein resides in the plastid. It localises to the chloroplast. Its function is as follows. One of the primary rRNA binding proteins, it binds directly to 16S rRNA where it nucleates assembly of the head domain of the 30S subunit. The polypeptide is Small ribosomal subunit protein uS7c (rps7) (Rhodomonas salina (Cryptomonas salina)).